Reading from the N-terminus, the 276-residue chain is Methylesterase 17 (276 aa).

The 120-residue stretch at 19–138 (PHFVLIHGMS…TDEDMKDGVP (120 aa)) folds into the AB hydrolase-1 domain. Catalysis depends on Ser95, which acts as the Acyl-ester intermediate. Active-site charge relay system residues include Asp225 and His252.

This sequence belongs to the AB hydrolase superfamily. Methylesterase family. As to expression, expressed in several tissues of seedlings and adult plants, with a higher relative level of expression in the seedling shoot apex and the adult stem.

The catalysed reaction is methyl (indol-3-yl)acetate + H2O = (indol-3-yl)acetate + methanol + H(+). Its pathway is plant hormone biosynthesis. Functionally, methylesterase that efficiently and specifically hydrolyzes methyl indole-3-acetic acid (MeIAA) to IAA (auxin). MeIAA is believed to be an inactive form of auxin that needs to be demethylated to exert a biological effect. This chain is Methylesterase 17, found in Arabidopsis thaliana (Mouse-ear cress).